A 210-amino-acid chain; its full sequence is N-(5'-phosphoribosyl)anthranilate isomerase (210 aa).

The protein belongs to the TrpF family.

The catalysed reaction is N-(5-phospho-beta-D-ribosyl)anthranilate = 1-(2-carboxyphenylamino)-1-deoxy-D-ribulose 5-phosphate. The protein operates within amino-acid biosynthesis; L-tryptophan biosynthesis; L-tryptophan from chorismate: step 3/5. The polypeptide is N-(5'-phosphoribosyl)anthranilate isomerase (Trichormus variabilis (strain ATCC 29413 / PCC 7937) (Anabaena variabilis)).